The sequence spans 253 residues: Ubiquinone biosynthesis O-methyltransferase (253 aa).

Positions 47, 78, 99, and 141 each coordinate S-adenosyl-L-methionine.

It belongs to the methyltransferase superfamily. UbiG/COQ3 family.

The catalysed reaction is a 3-demethylubiquinol + S-adenosyl-L-methionine = a ubiquinol + S-adenosyl-L-homocysteine + H(+). It catalyses the reaction a 3-(all-trans-polyprenyl)benzene-1,2-diol + S-adenosyl-L-methionine = a 2-methoxy-6-(all-trans-polyprenyl)phenol + S-adenosyl-L-homocysteine + H(+). It functions in the pathway cofactor biosynthesis; ubiquinone biosynthesis. Functionally, O-methyltransferase that catalyzes the 2 O-methylation steps in the ubiquinone biosynthetic pathway. The protein is Ubiquinone biosynthesis O-methyltransferase of Rhodopseudomonas palustris (strain HaA2).